A 505-amino-acid chain; its full sequence is Probable inorganic carbon transporter subunit DabB (505 aa).

A run of 13 helical transmembrane segments spans residues 9–29, 37–57, 68–88, 105–123, 162–182, 204–224, 231–251, 259–279, 303–323, 355–375, 382–402, 410–430, and 446–466; these read SLLT…LLFL, FVRI…LILA, WHLD…GFII, YFTL…WLSG, LFLL…HATG, TGIQ…WPFQ, IVAP…AGGI, LFHG…SVLI, GFML…HLIL, LWVM…WLTA, LISA…LVAF, IAGL…HHLF, and MSAV…GTWV.

It belongs to the inorganic carbon transporter (TC 9.A.2) DabB family. In terms of assembly, forms a complex with DabA.

It is found in the cell membrane. Its function is as follows. Part of an energy-coupled inorganic carbon pump. The sequence is that of Probable inorganic carbon transporter subunit DabB from Bacillus subtilis (strain 168).